The chain runs to 209 residues: Large ribosomal subunit protein uL3 (209 aa).

An N5-methylglutamine modification is found at glutamine 150.

Belongs to the universal ribosomal protein uL3 family. As to quaternary structure, part of the 50S ribosomal subunit. Forms a cluster with proteins L14 and L19. Post-translationally, methylated by PrmB.

In terms of biological role, one of the primary rRNA binding proteins, it binds directly near the 3'-end of the 23S rRNA, where it nucleates assembly of the 50S subunit. The sequence is that of Large ribosomal subunit protein uL3 from Escherichia coli O139:H28 (strain E24377A / ETEC).